The sequence spans 273 residues: Tryptophan synthase alpha chain (273 aa).

Residues Glu56 and Asp67 each act as proton acceptor in the active site.

This sequence belongs to the TrpA family. Tetramer of two alpha and two beta chains.

It carries out the reaction (1S,2R)-1-C-(indol-3-yl)glycerol 3-phosphate + L-serine = D-glyceraldehyde 3-phosphate + L-tryptophan + H2O. It participates in amino-acid biosynthesis; L-tryptophan biosynthesis; L-tryptophan from chorismate: step 5/5. In terms of biological role, the alpha subunit is responsible for the aldol cleavage of indoleglycerol phosphate to indole and glyceraldehyde 3-phosphate. The chain is Tryptophan synthase alpha chain from Shewanella baltica (strain OS155 / ATCC BAA-1091).